A 281-amino-acid chain; its full sequence is sn-glycerol-3-phosphate transport system permease protein UgpE (281 aa).

6 helical membrane passes run 14-34 (VMLI…FVAA), 82-104 (VMAF…AIVY), 113-133 (FFWL…FPTI), 142-162 (LDSY…TFLF), 188-210 (FWDI…TFIY), and 247-267 (WNQV…VVLL). The ABC transmembrane type-1 domain maps to 77-268 (LFNSFVMAFA…IPPVAVVLLM (192 aa)).

It belongs to the binding-protein-dependent transport system permease family. UgpAE subfamily. In terms of assembly, the complex is composed of two ATP-binding proteins (UgpC), two transmembrane proteins (UgpA and UgpE) and a solute-binding protein (UgpB).

It localises to the cell inner membrane. Part of the ABC transporter complex UgpBAEC involved in sn-glycerol-3-phosphate (G3P) import. Probably responsible for the translocation of the substrate across the membrane. The sequence is that of sn-glycerol-3-phosphate transport system permease protein UgpE (ugpE) from Yersinia enterocolitica serotype O:8 / biotype 1B (strain NCTC 13174 / 8081).